We begin with the raw amino-acid sequence, 250 residues long: 3-deoxy-manno-octulosonate cytidylyltransferase (250 aa).

This sequence belongs to the KdsB family.

The protein resides in the cytoplasm. It carries out the reaction 3-deoxy-alpha-D-manno-oct-2-ulosonate + CTP = CMP-3-deoxy-beta-D-manno-octulosonate + diphosphate. It participates in nucleotide-sugar biosynthesis; CMP-3-deoxy-D-manno-octulosonate biosynthesis; CMP-3-deoxy-D-manno-octulosonate from 3-deoxy-D-manno-octulosonate and CTP: step 1/1. It functions in the pathway bacterial outer membrane biogenesis; lipopolysaccharide biosynthesis. Activates KDO (a required 8-carbon sugar) for incorporation into bacterial lipopolysaccharide in Gram-negative bacteria. The polypeptide is 3-deoxy-manno-octulosonate cytidylyltransferase (Francisella tularensis subsp. holarctica (strain LVS)).